Reading from the N-terminus, the 337-residue chain is Zinc finger protein 488 (337 aa).

Polar residues predominate over residues 1–10 (MAAGTSTLLS). Disordered regions lie at residues 1–32 (MAAG…SVEK), 55–83 (SDTA…PRLD), and 146–179 (SAWP…MLLA). The interval 69–184 (TELSLPTAPN…PMLLAGGSAE (116 aa)) is important for transcriptional repression activity. C2H2-type zinc fingers lie at residues 272 to 299 (NWCA…KREH) and 314 to 336 (LTCP…MASH). A Nuclear localization signal motif is present at residues 295–302 (HKREHVGP).

Belongs to the krueppel C2H2-type zinc-finger protein family. Interacts with OLIG2.

Its subcellular location is the nucleus. Its function is as follows. Transcriptional repressor. Plays a role in oligodendrocyte differentiation, together with OLIG2. Mediates Notch signaling-activated formation of oligodendrocyte precursors. Promotes differentiation of adult neural stem progenitor cells (NSPCs) into mature oligodendrocytes and contributes to remyelination following nerve injury. The chain is Zinc finger protein 488 (Znf488) from Mus musculus (Mouse).